The following is a 95-amino-acid chain: Acylphosphatase (95 aa).

Residues 8-95 form the Acylphosphatase-like domain; the sequence is RAKILVRGKV…GNFRTFEIKK (88 aa). Residues R23 and N41 contribute to the active site.

This sequence belongs to the acylphosphatase family.

The catalysed reaction is an acyl phosphate + H2O = a carboxylate + phosphate + H(+). The polypeptide is Acylphosphatase (acyP) (Leptospira interrogans serogroup Icterohaemorrhagiae serovar copenhageni (strain Fiocruz L1-130)).